The chain runs to 211 residues: Urease accessory protein UreG (211 aa).

11–18 contacts GTP; it reads GPVGSGKT.

Belongs to the SIMIBI class G3E GTPase family. UreG subfamily. In terms of assembly, homodimer. UreD, UreF and UreG form a complex that acts as a GTP-hydrolysis-dependent molecular chaperone, activating the urease apoprotein by helping to assemble the nickel containing metallocenter of UreC. The UreE protein probably delivers the nickel.

The protein localises to the cytoplasm. Functionally, facilitates the functional incorporation of the urease nickel metallocenter. This process requires GTP hydrolysis, probably effectuated by UreG. In Laribacter hongkongensis (strain HLHK9), this protein is Urease accessory protein UreG.